Consider the following 494-residue polypeptide: Glycogen synthase (494 aa).

Lys-24 is a binding site for ADP-alpha-D-glucose.

It belongs to the glycosyltransferase 1 family. Bacterial/plant glycogen synthase subfamily.

It catalyses the reaction [(1-&gt;4)-alpha-D-glucosyl](n) + ADP-alpha-D-glucose = [(1-&gt;4)-alpha-D-glucosyl](n+1) + ADP + H(+). Its pathway is glycan biosynthesis; glycogen biosynthesis. Synthesizes alpha-1,4-glucan chains using ADP-glucose. The protein is Glycogen synthase of Aromatoleum aromaticum (strain DSM 19018 / LMG 30748 / EbN1) (Azoarcus sp. (strain EbN1)).